Reading from the N-terminus, the 185-residue chain is Shikimate kinase (185 aa).

21–26 (GVGKTT) provides a ligand contact to ATP. A Mg(2+)-binding site is contributed by threonine 25. Substrate contacts are provided by aspartate 43, arginine 67, and glycine 90. Arginine 129 contributes to the ATP binding site. Residue arginine 147 coordinates substrate.

This sequence belongs to the shikimate kinase family. As to quaternary structure, monomer. It depends on Mg(2+) as a cofactor.

The protein localises to the cytoplasm. The catalysed reaction is shikimate + ATP = 3-phosphoshikimate + ADP + H(+). The protein operates within metabolic intermediate biosynthesis; chorismate biosynthesis; chorismate from D-erythrose 4-phosphate and phosphoenolpyruvate: step 5/7. Functionally, catalyzes the specific phosphorylation of the 3-hydroxyl group of shikimic acid using ATP as a cosubstrate. The sequence is that of Shikimate kinase from Bacillus pumilus (strain SAFR-032).